The following is a 950-amino-acid chain: Protocadherin alpha-9 (950 aa).

The signal sequence occupies residues 1–29 (MLYSSRGDPEGQPLLLSLLILAMWVVGSG). 6 consecutive Cadherin domains span residues 30–133 (QLHY…PPVF), 134–242 (PATQ…APVF), 243–350 (DRTL…APQL), 351–455 (TIKT…APAF), 456–565 (AQSE…APAL), and 588–678 (GVVV…APKS). The Extracellular portion of the chain corresponds to 30–697 (QLHYSVPEEA…GPEVTLVDVN (668 aa)). 2 N-linked (GlcNAc...) asparagine glycosylation sites follow: N254 and N265. Residue N548 is glycosylated (N-linked (GlcNAc...) asparagine). The chain crosses the membrane as a helical span at residues 698 to 718 (VYLIIAICAVSSLLVLTLLLY). The Cytoplasmic segment spans residues 719-950 (TVLRCSAMPT…GNSTTDNSDQ (232 aa)). The stretch at 734-737 (PGKP) is one PXXP 1 repeat. The tract at residues 734–894 (PGKPTLVCSS…PDKFIIPGSP (161 aa)) is 5 X 4 AA repeats of P-X-X-P. Disordered stretches follow at residues 770–808 (MAFS…DWRY), 827–856 (ILRA…EVSP), and 871–950 (YGPG…NSDQ). Polar residues predominate over residues 789 to 798 (PSASSDSTGK). PXXP repeat units follow at residues 799–802 (PRQP), 832–835 (PGGP), 873–876 (PGNP), and 891–894 (PGSP). Over residues 909–923 (DKSDFITFGKKEETK) the composition is skewed to basic and acidic residues.

It is found in the cell membrane. Functionally, potential calcium-dependent cell-adhesion protein. May be involved in the establishment and maintenance of specific neuronal connections in the brain. In Homo sapiens (Human), this protein is Protocadherin alpha-9 (PCDHA9).